The following is a 158-amino-acid chain: NADH-quinone oxidoreductase subunit B (158 aa).

[4Fe-4S] cluster contacts are provided by cysteine 37, cysteine 38, cysteine 102, and cysteine 132.

It belongs to the complex I 20 kDa subunit family. NDH-1 is composed of 14 different subunits. Subunits NuoB, C, D, E, F, and G constitute the peripheral sector of the complex. [4Fe-4S] cluster is required as a cofactor.

It is found in the cell inner membrane. It carries out the reaction a quinone + NADH + 5 H(+)(in) = a quinol + NAD(+) + 4 H(+)(out). Functionally, NDH-1 shuttles electrons from NADH, via FMN and iron-sulfur (Fe-S) centers, to quinones in the respiratory chain. Couples the redox reaction to proton translocation (for every two electrons transferred, four hydrogen ions are translocated across the cytoplasmic membrane), and thus conserves the redox energy in a proton gradient. This chain is NADH-quinone oxidoreductase subunit B, found in Legionella pneumophila (strain Paris).